The following is a 662-amino-acid chain: DNA ligase (662 aa).

NAD(+) contacts are provided by residues 31–35 (DYEYD), 80–81 (SL), and Glu-109. Lys-111 serves as the catalytic N6-AMP-lysine intermediate. 4 residues coordinate NAD(+): Arg-132, Glu-166, Lys-282, and Lys-306. Positions 400, 403, 418, and 423 each coordinate Zn(2+). The BRCT domain occupies 581 to 662 (KVSNIFEGKT…FEEMLKGENI (82 aa)).

It belongs to the NAD-dependent DNA ligase family. LigA subfamily. Requires Mg(2+) as cofactor. It depends on Mn(2+) as a cofactor.

The catalysed reaction is NAD(+) + (deoxyribonucleotide)n-3'-hydroxyl + 5'-phospho-(deoxyribonucleotide)m = (deoxyribonucleotide)n+m + AMP + beta-nicotinamide D-nucleotide.. DNA ligase that catalyzes the formation of phosphodiester linkages between 5'-phosphoryl and 3'-hydroxyl groups in double-stranded DNA using NAD as a coenzyme and as the energy source for the reaction. It is essential for DNA replication and repair of damaged DNA. The polypeptide is DNA ligase (Thermoanaerobacter sp. (strain X514)).